A 333-amino-acid chain; its full sequence is MKKSTKLLAGIVTLASAMTLAACQSTNDNTSVITMKGDTISVSDFYNETKNTEISQRAMLNLVVSRVFEDQYGKKVSKKRTEEAYNKSAEQYGASFSAALAQSGLTTDTYKRQIRSAMLVEYAVKEAAKKELTDADYKKAYESYTPEMTTQVTTLDNEETAKAVLGEVKAEGADFAAIAKEKTTAADKKVDYKFDSGDTKLPADVIKAASGLKEGDISEVVSVLDPATYQNKFYIVKVTKKAEKASDWKKYKKRLKEIVLAEKTQNIDFQNKVIAKALDKANVKIKDQAFANILAQYANTDKKASKANTSKSDQKSSSDSSKDSQSSKSKSEK.

The signal sequence occupies residues 1–22; that stretch reads MKKSTKLLAGIVTLASAMTLAA. A lipid anchor (N-palmitoyl cysteine) is attached at Cys23. Cys23 carries S-diacylglycerol cysteine lipidation. The PpiC domain occupies 145 to 240; sequence TPEMTTQVTT…NKFYIVKVTK (96 aa). The interval 301–333 is disordered; sequence DKKASKANTSKSDQKSSSDSSKDSQSSKSKSEK. Residues 312-322 are compositionally biased toward basic and acidic residues; the sequence is SDQKSSSDSSK. A compositionally biased stretch (low complexity) spans 323 to 333; that stretch reads DSQSSKSKSEK.

The protein belongs to the PrsA family.

The protein resides in the cell membrane. It carries out the reaction [protein]-peptidylproline (omega=180) = [protein]-peptidylproline (omega=0). Plays a major role in protein secretion by helping the post-translocational extracellular folding of several secreted proteins. This is Foldase protein PrsA from Streptococcus equi subsp. equi (strain 4047).